A 495-amino-acid polypeptide reads, in one-letter code: Chromosomal replication initiator protein DnaA (495 aa).

Residues 1-91 (MTADPDPPFV…ITALSRHLGQ (91 aa)) are domain I, interacts with DnaA modulators. The tract at residues 91 to 154 (QRVELGVRIA…TPAAEDPNAV (64 aa)) is domain II. The segment at 155 to 371 (SLNRRYTFDT…GALIRVTAFA (217 aa)) is domain III, AAA+ region. 4 residues coordinate ATP: Gly199, Gly201, Lys202, and Thr203. The domain IV, binds dsDNA stretch occupies residues 372 to 495 (SLNKTPIDKS…TTRIRQRAKR (124 aa)).

The protein belongs to the DnaA family. Oligomerizes as a right-handed, spiral filament on DNA at oriC.

Its subcellular location is the cytoplasm. Plays an essential role in the initiation and regulation of chromosomal replication. ATP-DnaA binds to the origin of replication (oriC) to initiate formation of the DNA replication initiation complex once per cell cycle. Binds the DnaA box (a 9 base pair repeat at the origin) and separates the double-stranded (ds)DNA. Forms a right-handed helical filament on oriC DNA; dsDNA binds to the exterior of the filament while single-stranded (ss)DNA is stabiized in the filament's interior. The ATP-DnaA-oriC complex binds and stabilizes one strand of the AT-rich DNA unwinding element (DUE), permitting loading of DNA polymerase. After initiation quickly degrades to an ADP-DnaA complex that is not apt for DNA replication. Binds acidic phospholipids. This Mycobacterium sp. (strain JLS) protein is Chromosomal replication initiator protein DnaA.